A 319-amino-acid polypeptide reads, in one-letter code: Ribosomal large subunit pseudouridine synthase C (319 aa).

In terms of domain architecture, S4 RNA-binding spans 20–83; it reads QRIDNFLRTQ…AEREEEAVSP (64 aa). The active site involves aspartate 144.

This sequence belongs to the pseudouridine synthase RluA family.

It carries out the reaction uridine(955/2504/2580) in 23S rRNA = pseudouridine(955/2504/2580) in 23S rRNA. Responsible for synthesis of pseudouridine from uracil at positions 955, 2504 and 2580 in 23S ribosomal RNA. This chain is Ribosomal large subunit pseudouridine synthase C, found in Escherichia coli (strain K12).